Consider the following 194-residue polypeptide: Imidazoleglycerol-phosphate dehydratase (194 aa).

Belongs to the imidazoleglycerol-phosphate dehydratase family.

It is found in the cytoplasm. It catalyses the reaction D-erythro-1-(imidazol-4-yl)glycerol 3-phosphate = 3-(imidazol-4-yl)-2-oxopropyl phosphate + H2O. It functions in the pathway amino-acid biosynthesis; L-histidine biosynthesis; L-histidine from 5-phospho-alpha-D-ribose 1-diphosphate: step 6/9. The chain is Imidazoleglycerol-phosphate dehydratase from Limosilactobacillus fermentum (strain NBRC 3956 / LMG 18251) (Lactobacillus fermentum).